A 119-amino-acid chain; its full sequence is Large ribosomal subunit protein uL22 (119 aa).

Belongs to the universal ribosomal protein uL22 family. Part of the 50S ribosomal subunit.

Functionally, this protein binds specifically to 23S rRNA; its binding is stimulated by other ribosomal proteins, e.g. L4, L17, and L20. It is important during the early stages of 50S assembly. It makes multiple contacts with different domains of the 23S rRNA in the assembled 50S subunit and ribosome. Its function is as follows. The globular domain of the protein is located near the polypeptide exit tunnel on the outside of the subunit, while an extended beta-hairpin is found that lines the wall of the exit tunnel in the center of the 70S ribosome. The polypeptide is Large ribosomal subunit protein uL22 (Rickettsia bellii (strain OSU 85-389)).